Consider the following 647-residue polypeptide: Acetyl-coenzyme A synthetase (647 aa).

CoA-binding positions include 190-193, T310, and N334; that span reads RGGK. ATP is bound by residues 386-388, 410-415, D499, and R514; these read GEP and DTWWQT. S522 contacts CoA. R525 is a binding site for ATP. Mg(2+)-binding residues include V536, H538, and V541. CoA is bound at residue R583. K608 is subject to N6-acetyllysine.

This sequence belongs to the ATP-dependent AMP-binding enzyme family. Requires Mg(2+) as cofactor. Post-translationally, acetylated. Deacetylation by the SIR2-homolog deacetylase activates the enzyme.

The catalysed reaction is acetate + ATP + CoA = acetyl-CoA + AMP + diphosphate. Catalyzes the conversion of acetate into acetyl-CoA (AcCoA), an essential intermediate at the junction of anabolic and catabolic pathways. AcsA undergoes a two-step reaction. In the first half reaction, AcsA combines acetate with ATP to form acetyl-adenylate (AcAMP) intermediate. In the second half reaction, it can then transfer the acetyl group from AcAMP to the sulfhydryl group of CoA, forming the product AcCoA. This chain is Acetyl-coenzyme A synthetase, found in Xanthomonas campestris pv. campestris (strain 8004).